The chain runs to 488 residues: Argininosuccinate lyase (488 aa).

The protein belongs to the lyase 1 family. Argininosuccinate lyase subfamily.

The protein localises to the cytoplasm. The enzyme catalyses 2-(N(omega)-L-arginino)succinate = fumarate + L-arginine. The protein operates within amino-acid biosynthesis; L-arginine biosynthesis; L-arginine from L-ornithine and carbamoyl phosphate: step 3/3. The chain is Argininosuccinate lyase from Corynebacterium jeikeium (strain K411).